Consider the following 418-residue polypeptide: Thyroid hormone receptor alpha-A (418 aa).

The disordered stretch occupies residues 1 to 38 (MDQNLSGLDCLSEPDEKRWPDGKRKRKNSQCMGKSGMS). The interval 1-60 (MDQNLSGLDCLSEPDEKRWPDGKRKRKNSQCMGKSGMSGDSLVSLPSAGYIPSYLDKDEP) is modulating. NR C4-type zinc fingers lie at residues 61 to 81 (CVVC…CEGC) and 99 to 123 (CKYD…FKKC). The segment at residues 61 to 135 (CVVCSDKATG…VGMAMDLVLD (75 aa)) is a DNA-binding region (nuclear receptor). The region spanning 171–415 (EEWELIRIVT…PPLFLEVFED (245 aa)) is the NR LBD domain.

It belongs to the nuclear hormone receptor family. NR1 subfamily. In terms of assembly, binds to thyroid hormone receptor element (TRE) weakly as homodimers and monomers, but binds TRE with much higher affinity as heterodimers with retinoid X receptors. Can bind DNA as a heterodimer with either rxra or rxrg.

It is found in the nucleus. Functionally, high affinity receptor for triiodothyronine (T3). The polypeptide is Thyroid hormone receptor alpha-A (thra-a) (Xenopus laevis (African clawed frog)).